We begin with the raw amino-acid sequence, 277 residues long: Small ribosomal subunit protein uS2 (277 aa).

Basic and acidic residues-rich tracts occupy residues 227-256 (QARA…RTEA) and 267-277 (SEAKAEGNTEA). The disordered stretch occupies residues 227-277 (QARAERQEAAAKEAAGDADKAPAEAERTEAPAEEAPAEAQSEAKAEGNTEA).

The protein belongs to the universal ribosomal protein uS2 family.

The chain is Small ribosomal subunit protein uS2 from Corynebacterium jeikeium (strain K411).